A 284-amino-acid chain; its full sequence is Ermin (284 aa).

The tract at residues 1-23 (MTDVPATFTQAECNGDKPPENGQ) is disordered. Residue Ser-73 is modified to Phosphoserine. Positions 110-251 (REGHQWEKIP…PTLGKKSDIS (142 aa)) are disordered. Basic and acidic residues-rich tracts occupy residues 126–140 (EIRR…QPLK) and 171–183 (LHSK…KVWD). Positions 184–200 (EEIDDDDDDNCNNDEDE) are enriched in acidic residues. Residues 201-220 (VRVIEFKKKHEEVSQFKEEG) show a composition bias toward basic and acidic residues. Phosphoserine is present on residues Ser-214, Ser-226, Ser-230, and Ser-233. A compositionally biased stretch (low complexity) spans 225-235 (DSPLSSASSQA). Residue Thr-237 is modified to Phosphothreonine. A binds actin region spans residues 265 to 284 (KIRKGNTKQRIDEFESMMHL).

Binds actin. In terms of tissue distribution, highly expressed in adult and fetal brain. Expressed at intermediate levels in the lung and liver.

It localises to the cytoplasm. The protein localises to the cytoskeleton. In terms of biological role, plays a role in cytoskeletal rearrangements during the late wrapping and/or compaction phases of myelinogenesis as well as in maintenance and stability of myelin sheath in the adult. May play an important role in late-stage oligodendroglia maturation, myelin/Ranvier node formation during CNS development, and in the maintenance and plasticity of related structures in the mature CNS. The sequence is that of Ermin (ERMN) from Homo sapiens (Human).